The following is a 296-amino-acid chain: Light-independent protochlorophyllide reductase iron-sulfur ATP-binding protein (296 aa).

ATP-binding positions include 39–44 (GIGKST) and K68. S43 contributes to the Mg(2+) binding site. Residues C124 and C158 each coordinate [4Fe-4S] cluster. An ATP-binding site is contributed by 209–210 (NR).

It belongs to the NifH/BchL/ChlL family. In terms of assembly, homodimer. Protochlorophyllide reductase is composed of three subunits; ChlL, ChlN and ChlB. It depends on [4Fe-4S] cluster as a cofactor.

It catalyses the reaction chlorophyllide a + oxidized 2[4Fe-4S]-[ferredoxin] + 2 ADP + 2 phosphate = protochlorophyllide a + reduced 2[4Fe-4S]-[ferredoxin] + 2 ATP + 2 H2O. Its pathway is porphyrin-containing compound metabolism; chlorophyll biosynthesis (light-independent). Component of the dark-operative protochlorophyllide reductase (DPOR) that uses Mg-ATP and reduced ferredoxin to reduce ring D of protochlorophyllide (Pchlide) to form chlorophyllide a (Chlide). This reaction is light-independent. The L component serves as a unique electron donor to the NB-component of the complex, and binds Mg-ATP. This Synechococcus sp. (strain WH7803) protein is Light-independent protochlorophyllide reductase iron-sulfur ATP-binding protein.